The sequence spans 437 residues: UDP-glucose 6-dehydrogenase (437 aa).

NAD(+)-binding residues include Val11, Asp30, Lys35, Thr86, Thr122, and Glu155. Substrate contacts are provided by residues 151-155, Lys209, Asn213, 254-258, and Gly262; these read EFLRE and FLHAG. Cys265 functions as the Nucleophile in the catalytic mechanism. Lys268 provides a ligand contact to NAD(+). A substrate-binding site is contributed by Lys326. NAD(+) is bound at residue Arg333.

Belongs to the UDP-glucose/GDP-mannose dehydrogenase family.

It carries out the reaction UDP-alpha-D-glucose + 2 NAD(+) + H2O = UDP-alpha-D-glucuronate + 2 NADH + 3 H(+). Its pathway is nucleotide-sugar biosynthesis; UDP-alpha-D-glucuronate biosynthesis; UDP-alpha-D-glucuronate from UDP-alpha-D-glucose: step 1/1. It functions in the pathway capsule biogenesis; capsule polysaccharide biosynthesis. The chain is UDP-glucose 6-dehydrogenase from Rhizobium meliloti (strain 1021) (Ensifer meliloti).